Here is a 1051-residue protein sequence, read N- to C-terminus: Carbamoyl phosphate synthase large chain (1051 aa).

A carboxyphosphate synthetic domain region spans residues 1-399; sequence MRETPKKVLV…SLQKAIRMLD (399 aa). ATP is bound by residues Arg-127, Arg-167, Gly-173, Gly-174, Lys-206, Leu-208, Glu-213, Gly-239, Val-240, His-241, Gln-282, and Glu-296. An ATP-grasp 1 domain is found at 131-325; the sequence is RETMIENNLP…LAYVSAKLAL (195 aa). The Mg(2+) site is built by Gln-282, Glu-296, and Asn-298. The Mn(2+) site is built by Gln-282, Glu-296, and Asn-298. The segment at 400–548 is oligomerization domain; it reads IGEPGVVGGK…LTYNGTEDDI (149 aa). Positions 549 to 930 are carbamoyl phosphate synthetic domain; the sequence is EFSQGNKLLI…LKSWLSSMPN (382 aa). In terms of domain architecture, ATP-grasp 2 spans 673–863; sequence SKLLDKLGIS…LINESMKAIF (191 aa). ATP is bound by residues Arg-709, Lys-748, Ile-750, Glu-755, Gly-779, Val-780, His-781, Ser-782, Gln-822, and Glu-834. Positions 822, 834, and 836 each coordinate Mg(2+). Mn(2+) contacts are provided by Gln-822, Glu-834, and Asn-836. In terms of domain architecture, MGS-like spans 930-1051; that stretch reads NRIPNKNGIA…FEISEYGGGI (122 aa). Positions 931-1051 are allosteric domain; sequence RIPNKNGIAL…FEISEYGGGI (121 aa).

Belongs to the CarB family. In terms of assembly, composed of two chains; the small (or glutamine) chain promotes the hydrolysis of glutamine to ammonia, which is used by the large (or ammonia) chain to synthesize carbamoyl phosphate. Tetramer of heterodimers (alpha,beta)4. Mg(2+) is required as a cofactor. It depends on Mn(2+) as a cofactor.

The enzyme catalyses hydrogencarbonate + L-glutamine + 2 ATP + H2O = carbamoyl phosphate + L-glutamate + 2 ADP + phosphate + 2 H(+). The catalysed reaction is hydrogencarbonate + NH4(+) + 2 ATP = carbamoyl phosphate + 2 ADP + phosphate + 2 H(+). It functions in the pathway amino-acid biosynthesis; L-arginine biosynthesis; carbamoyl phosphate from bicarbonate: step 1/1. Its pathway is pyrimidine metabolism; UMP biosynthesis via de novo pathway; (S)-dihydroorotate from bicarbonate: step 1/3. Large subunit of the glutamine-dependent carbamoyl phosphate synthetase (CPSase). CPSase catalyzes the formation of carbamoyl phosphate from the ammonia moiety of glutamine, carbonate, and phosphate donated by ATP, constituting the first step of 2 biosynthetic pathways, one leading to arginine and/or urea and the other to pyrimidine nucleotides. The large subunit (synthetase) binds the substrates ammonia (free or transferred from glutamine from the small subunit), hydrogencarbonate and ATP and carries out an ATP-coupled ligase reaction, activating hydrogencarbonate by forming carboxy phosphate which reacts with ammonia to form carbamoyl phosphate. The sequence is that of Carbamoyl phosphate synthase large chain from Saccharolobus solfataricus (strain ATCC 35092 / DSM 1617 / JCM 11322 / P2) (Sulfolobus solfataricus).